We begin with the raw amino-acid sequence, 147 residues long: HTH-type transcriptional regulator HmrR (147 aa).

One can recognise an HTH merR-type domain in the interval 1–69; the sequence is MNIGEASKVS…VEQIKELLAL (69 aa). The segment at residues 4–23 is a DNA-binding region (H-T-H motif); it reads GEASKVSGVSSKMIRYYEQI.

As to quaternary structure, homodimer.

It localises to the cytoplasm. In terms of biological role, regulates the transcription of actP. It detects cytoplasmic copper stress and activates transcription in response to increasing copper concentrations. In the absence of copper, it negatively regulates the transcription of actP. The chain is HTH-type transcriptional regulator HmrR (hmrR) from Sinorhizobium medicae (strain WSM419) (Ensifer medicae).